The sequence spans 773 residues: MASRNRALFSVSTLFLCFIVCISEQSNNQSSPVFACDVTGNPSLAGLRFCNAGLSIKARVTDLVGRLTLEEKIGFLTSKAIGVSRLGIPSYKWWSEALHGVSNVGGGSRFTGQVPGATSFPQVILTAASFNVSLFQAIGKVVSTEARAMYNVGSAGLTFWSPNVNIFRDPRWGRGQETPGEDPTLSSKYAVAYVKGLQETDGGDPNRLKVAACCKHYTAYDIDNWRNVNRLTFNAVVNQQDLADTFQPPFKSCVVDGHVASVMCSYNQVNGKPTCADPDLLSGVIRGQWQLNGYIVSDCDSVDVLFRKQHYAKTPEEAVAKSLLAGLDLNCDHFNGQHAMGAVKAGLVNETAIDKAISNNFATLMRLGFFDGDPKKQLYGGLGPKDVCTADNQELARDGARQGIVLLKNSAGSLPLSPSAIKTLAVIGPNANATETMIGNYHGVPCKYTTPLQGLAETVSSTYQLGCNVACVDADIGSAVDLAASADAVVLVVGADQSIEREGHDRVDLYLPGKQQELVTRVAMAARGPVVLVIMSGGGFDITFAKNDKKITSIMWVGYPGEAGGLAIADVIFGRHNPSGNLPMTWYPQSYVEKVPMSNMNMRPDKSKGYPGRSYRFYTGETVYAFADALTYTKFDHQLIKAPRLVSLSLDENHPCRSSECQSLDAIGPHCENAVEGGSDFEVHLNVKNTGDRAGSHTVFLFTTSPQVHGSPIKQLLGFEKIRLGKSEEAVVRFNVNVCKDLSVVDETGKRKIALGHHLLHVGSLKHSLNISV.

The signal sequence occupies residues Met1–Ser23. The N-linked (GlcNAc...) asparagine glycan is linked to Asn131. The active site involves Asp298. 3 N-linked (GlcNAc...) asparagine glycosylation sites follow: Asn349, Asn432, and Asn770.

Belongs to the glycosyl hydrolase 3 family. Expressed in flowers and siliques, in the early stage of seed formation and not at seed maturation. Detected exclusively in the endosperm of very young seeds when the embryo is at the globular stage.

The protein resides in the secreted. Its subcellular location is the extracellular space. It is found in the extracellular matrix. It catalyses the reaction Hydrolysis of terminal non-reducing alpha-L-arabinofuranoside residues in alpha-L-arabinosides.. Functionally, involved in the hydrolysis of arabinan. Can hydrolyze (1,3)-alpha-, (1,2)-alpha-linked side group residues and non-reducing terminal L-arabinofuranose residues of debranched (1,5)-alpha-L-arabinan backbone. Also acts as a beta-D-xylosidase, releasing D-xylose from arabinoxylan and xylan. The sequence is that of Beta-D-xylosidase 3 (BXL3) from Arabidopsis thaliana (Mouse-ear cress).